Here is a 179-residue protein sequence, read N- to C-terminus: Outer-membrane lipoprotein carrier protein (179 aa).

The signal sequence occupies residues 1–22 (MEVLRRYVLVFTSLCMTLFAWG).

The protein belongs to the LolA family. As to quaternary structure, monomer.

It localises to the periplasm. Its function is as follows. Participates in the translocation of lipoproteins from the inner membrane to the outer membrane. Only forms a complex with a lipoprotein if the residue after the N-terminal Cys is not an aspartate (The Asp acts as a targeting signal to indicate that the lipoprotein should stay in the inner membrane). This is Outer-membrane lipoprotein carrier protein from Helicobacter hepaticus (strain ATCC 51449 / 3B1).